The chain runs to 696 residues: Solute carrier family 53 member 1 (696 aa).

The Cytoplasmic segment spans residues 1–228 (MKFAEHLSAH…RVPPLGAAQP (228 aa)). In terms of domain architecture, SPX spans 2-224 (KFAEHLSAHI…MKRLRVPPLG (223 aa)). Residues 158–165 (KILKKHDK) are important for inositol polyphosphate binding. The chain crosses the membrane as a helical span at residues 229-259 (APAWTTFRVGLFCGIFIVLNITLVLAAVFKL). Topologically, residues 260–264 (ETDRS) are extracellular. The helical transmembrane segment at 265-296 (IWPLIRIYRGGFLLIEFLFLLGINTYGWRQAG) threads the bilayer. Over 297 to 309 (VNHVLIFELNPRS) the chain is Cytoplasmic. A helical membrane pass occupies residues 310–337 (NLSHQHLFEIAGFLGILWCLSLLACFFA). Over 338-343 (PISVIP) the chain is Extracellular. Residues 344–365 (TYVYPLALYGFMVFFLINPTKT) traverse the membrane as a helical segment. Positions 366–383 (FYYKSRFWLLKLLFRVFT) form an intramembrane region, helical. Topologically, residues 384 to 388 (APFHK) are cytoplasmic. Residues 389 to 422 (VGFADFWLADQLNSLSVILMDLEYMICFYSLELK) traverse the membrane as a discontinuously helical segment. Asp-398 and Asn-401 together coordinate phosphate. Residues 423 to 429 (WDESKGL) lie on the Extracellular side of the membrane. A discontinuously helical transmembrane segment spans residues 430-471 (LPNNSEESGICHKYTYGVRAIVQCIPAWLRFIQCLRRYRDTK). Residues 439 to 643 (ICHKYTYGVR…LNADDQTLLE (205 aa)) form the EXS domain. Position 472 (Arg-472) is a topological domain, cytoplasmic. A helical membrane pass occupies residues 473-503 (AFPHLVNAGKYSTTFFMVTFAALYSTHKERG). Phosphate contacts are provided by Lys-482 and Tyr-483. The Extracellular segment spans residues 504–506 (HSD). A helical transmembrane segment spans residues 507–534 (TMVFFYLWIVFYIISSCYTLIWDLKMDW). Residues 535–553 (GLFDKNAGENTFLREEIVY) are Cytoplasmic-facing. A discontinuously helical transmembrane segment spans residues 554–585 (PQKAYYYCAIIEDVILRFAWTIQISITSTTLL). Arg-570 contributes to the phosphate binding site. The Extracellular segment spans residues 586–587 (PH). Residues 588–626 (SGDIIATVFAPLEVFRRFVWNFFRLENEHLNNCGEFRAV) form a helical membrane-spanning segment. Residues Arg-603 and Arg-604 each contribute to the phosphate site. Over 627-696 (RDISVAPLNA…IEDTDDEANT (70 aa)) the chain is Cytoplasmic. Ser-668 carries the phosphoserine modification. The tract at residues 673–696 (RLASQSKARDTKVLIEDTDDEANT) is disordered. A Phosphothreonine modification is found at Thr-690.

It belongs to the SYG1 (TC 2.A.94) family. As to quaternary structure, homodimer. As to expression, widely expressed. Detected in spleen, lymph node, thymus, leukocytes, bone marrow, heart, kidney, pancreas and skeletal muscle.

It localises to the cell membrane. The enzyme catalyses phosphate(in) = phosphate(out). Allosterically activated by inositol hexakisphosphate (Ins6P). In terms of biological role, inorganic ion transporter that mediates phosphate ion export across plasma membrane. Plays a major role in phosphate homeostasis, preventing intracellular phosphate accumulation and possible calcium phosphate precipitation, ultimately preserving calcium signaling. Binds inositol hexakisphosphate (Ins6P) and similar inositol polyphosphates, such as 5-diphospho-inositol pentakisphosphate (5-InsP7), which are important intracellular signaling molecules involved in regulation of phosphate flux. This is Solute carrier family 53 member 1 from Homo sapiens (Human).